The following is a 250-amino-acid chain: MKKLMAANWKMYKTPQEAALTAGELVKAVGTVPDDREVLVFPPFVGLAQVAQAFSGVAGFYCGAQNVYPADEGAYTGEISPGMIVSTGAAWALTGHSERRSVLGESSAFVGQKTAFCLEKGLNVVLCIGETLEEREGGQLEKVLRGQLSEGLSGVPAGIAPERLAIAYEPVWAIGTGKVAGTAEIAATHAVVRGMLRELLPAAADSMRILYGGSVKPDNAAAIISLDNVDGVLVGGASLQAESFSRIILA.

A substrate-binding site is contributed by 8 to 10 (NWK). His-96 acts as the Electrophile in catalysis. Glu-169 functions as the Proton acceptor in the catalytic mechanism. Substrate is bound by residues Gly-175, Ser-214, and 235–236 (GG).

This sequence belongs to the triosephosphate isomerase family. As to quaternary structure, homodimer.

The protein localises to the cytoplasm. It catalyses the reaction D-glyceraldehyde 3-phosphate = dihydroxyacetone phosphate. It functions in the pathway carbohydrate biosynthesis; gluconeogenesis. It participates in carbohydrate degradation; glycolysis; D-glyceraldehyde 3-phosphate from glycerone phosphate: step 1/1. In terms of biological role, involved in the gluconeogenesis. Catalyzes stereospecifically the conversion of dihydroxyacetone phosphate (DHAP) to D-glyceraldehyde-3-phosphate (G3P). This chain is Triosephosphate isomerase, found in Oleidesulfovibrio alaskensis (strain ATCC BAA-1058 / DSM 17464 / G20) (Desulfovibrio alaskensis).